The following is a 634-amino-acid chain: Chaperone protein HtpG (634 aa).

Residues 1–343 (MTEAENRVTL…SDSLPLNVSR (343 aa)) are a; substrate-binding. The tract at residues 344–560 (EILQENKQLE…SYGMSRTMER (217 aa)) is b. Residues 561-634 (IMKSAGQNIP…KLNGLLQSLL (74 aa)) are c.

The protein belongs to the heat shock protein 90 family. In terms of assembly, homodimer.

The protein resides in the cytoplasm. Its function is as follows. Molecular chaperone. Has ATPase activity. This is Chaperone protein HtpG from Methylococcus capsulatus (strain ATCC 33009 / NCIMB 11132 / Bath).